Reading from the N-terminus, the 297-residue chain is Aspartate carbamoyltransferase catalytic subunit (297 aa).

2 residues coordinate carbamoyl phosphate: arginine 49 and threonine 50. L-aspartate is bound at residue lysine 77. Arginine 99, histidine 129, and glutamine 132 together coordinate carbamoyl phosphate. L-aspartate contacts are provided by arginine 162 and arginine 215. Residues glycine 256 and proline 257 each contribute to the carbamoyl phosphate site.

The protein belongs to the aspartate/ornithine carbamoyltransferase superfamily. ATCase family. Heterododecamer (2C3:3R2) of six catalytic PyrB chains organized as two trimers (C3), and six regulatory PyrI chains organized as three dimers (R2).

It catalyses the reaction carbamoyl phosphate + L-aspartate = N-carbamoyl-L-aspartate + phosphate + H(+). Its pathway is pyrimidine metabolism; UMP biosynthesis via de novo pathway; (S)-dihydroorotate from bicarbonate: step 2/3. Functionally, catalyzes the condensation of carbamoyl phosphate and aspartate to form carbamoyl aspartate and inorganic phosphate, the committed step in the de novo pyrimidine nucleotide biosynthesis pathway. The chain is Aspartate carbamoyltransferase catalytic subunit from Legionella pneumophila (strain Paris).